The following is an 87-amino-acid chain: Selenoprotein W (87 aa).

A cross-link (cysteinyl-selenocysteine (Cys-Sec); redox-active) is located at residues 10-13 (CGAU). Position 13 (selenocysteine 13) is a non-standard amino acid, selenocysteine. The residue at position 37 (cysteine 37) is an S-glutathionyl cysteine.

This sequence belongs to the SelWTH family. Selenoprotein W subfamily. Interacts with DPYSL2, PRDX1, YWHAB, YWHAG, HSP70 and HSP90. Highest levels detected in skeletal muscle, tongue, heart and brain. Expressed at significantly higher levels in female skeletal muscle than in male and at slightly higher levels in female cardiac muscle than in male (at protein level). Also detected at low levels in liver.

Its subcellular location is the cytoplasm. Its function is as follows. Plays a role as a glutathione (GSH)-dependent antioxidant. May be involved in a redox-related process. May play a role in the myopathies of selenium deficiency. This is Selenoprotein W from Macaca mulatta (Rhesus macaque).